Consider the following 115-residue polypeptide: NADH-ubiquinone oxidoreductase chain 3 (115 aa).

3 helical membrane passes run 3 to 23 (LMLT…IAFW), 55 to 75 (FFLV…LLPL), and 84 to 104 (LNTM…SLAY).

The protein belongs to the complex I subunit 3 family. As to quaternary structure, core subunit of respiratory chain NADH dehydrogenase (Complex I) which is composed of 45 different subunits. Interacts with TMEM186. Interacts with TMEM242.

It localises to the mitochondrion inner membrane. It carries out the reaction a ubiquinone + NADH + 5 H(+)(in) = a ubiquinol + NAD(+) + 4 H(+)(out). Core subunit of the mitochondrial membrane respiratory chain NADH dehydrogenase (Complex I) which catalyzes electron transfer from NADH through the respiratory chain, using ubiquinone as an electron acceptor. Essential for the catalytic activity of complex I. This is NADH-ubiquinone oxidoreductase chain 3 from Equus asinus (Donkey).